The primary structure comprises 118 residues: Large ribosomal subunit protein uL18 (118 aa).

The protein belongs to the universal ribosomal protein uL18 family. In terms of assembly, part of the 50S ribosomal subunit; part of the 5S rRNA/L5/L18/L25 subcomplex. Contacts the 5S and 23S rRNAs.

In terms of biological role, this is one of the proteins that bind and probably mediate the attachment of the 5S RNA into the large ribosomal subunit, where it forms part of the central protuberance. This Levilactobacillus brevis (strain ATCC 367 / BCRC 12310 / CIP 105137 / JCM 1170 / LMG 11437 / NCIMB 947 / NCTC 947) (Lactobacillus brevis) protein is Large ribosomal subunit protein uL18.